The chain runs to 617 residues: LEAF RUST 10 DISEASE-RESISTANCE LOCUS RECEPTOR-LIKE PROTEIN KINASE-like 2.4 (617 aa).

An N-terminal signal peptide occupies residues 1–26; it reads MYYLPSSCLVLFLFFSLFYHLPCASS. Topologically, residues 27–243 are extracellular; the sequence is KQTLGWCESQ…LPTRLSSEAK (217 aa). N-linked (GlcNAc...) asparagine glycosylation is found at N41, N69, N86, N112, and N184. The helical transmembrane segment at 244–264 threads the bilayer; that stretch reads IATIAGVSLLPFLVLTLVVHI. The Cytoplasmic portion of the chain corresponds to 265–617; sequence IRKQKTSNDK…SEENSISSEI (353 aa). Residues 307–594 enclose the Protein kinase domain; sequence NSFAEVVGRG…ALEVPPRPVL (288 aa). Residues 313-321 and K335 contribute to the ATP site; that span reads VGRGGFGIV. The residue at position 380 (Y380) is a Phosphotyrosine. D431 (proton acceptor) is an active-site residue. Phosphothreonine occurs at positions 468 and 471.

It belongs to the protein kinase superfamily. Ser/Thr protein kinase family.

It is found in the membrane. It carries out the reaction L-seryl-[protein] + ATP = O-phospho-L-seryl-[protein] + ADP + H(+). The enzyme catalyses L-threonyl-[protein] + ATP = O-phospho-L-threonyl-[protein] + ADP + H(+). The polypeptide is LEAF RUST 10 DISEASE-RESISTANCE LOCUS RECEPTOR-LIKE PROTEIN KINASE-like 2.4 (Arabidopsis thaliana (Mouse-ear cress)).